The sequence spans 626 residues: Membrane protein insertase YidC (626 aa).

The next 5 helical transmembrane spans lie at 8 to 28, 399 to 419, 469 to 489, 527 to 547, and 563 to 583; these read LILATGLSFVVILVWFLLFPP, MGLAIISLTLIVKAVLFPLAY, LPILLQIPIFFSLYKVIFVTL, SIMALIFIGILPLLLGISMWL, and IFAWLPWVFMFMLGSFASGLL.

Belongs to the OXA1/ALB3/YidC family. Type 1 subfamily. In terms of assembly, interacts with the Sec translocase complex via SecD. Specifically interacts with transmembrane segments of nascent integral membrane proteins during membrane integration.

It localises to the cell inner membrane. Required for the insertion and/or proper folding and/or complex formation of integral membrane proteins into the membrane. Involved in integration of membrane proteins that insert both dependently and independently of the Sec translocase complex, as well as at least some lipoproteins. Aids folding of multispanning membrane proteins. The sequence is that of Membrane protein insertase YidC from Jannaschia sp. (strain CCS1).